We begin with the raw amino-acid sequence, 79 residues long: MVKLRLKRYGRKQQPTYRIIAIDVRCRRDGKALKEVGFYDPLKDKTQLNVPAILTLLQHGAQPTDTVSHILQKAGVFEK.

The protein belongs to the bacterial ribosomal protein bS16 family.

It localises to the plastid. Its subcellular location is the chloroplast. The protein is Small ribosomal subunit protein bS16c of Staurastrum punctulatum (Green alga).